We begin with the raw amino-acid sequence, 577 residues long: Polyadenylate-binding protein, cytoplasmic and nuclear (577 aa).

Residues 1–10 (MADITDKTAE) are compositionally biased toward basic and acidic residues. The tract at residues 1–36 (MADITDKTAEQLENLNIQDDQKQAATGSESQSVENS) is disordered. Alanine 2 carries the N-acetylalanine modification. A Glycyl lysine isopeptide (Lys-Gly) (interchain with G-Cter in ubiquitin) cross-link involves residue lysine 7. Residues 9–61 (AEQLENLNIQDDQKQAATGSESQSVENSSASLYVGDLEPSVSEAHLYDIFSPI) are required and sufficient for nuclear export. The segment covering 11-27 (QLENLNIQDDQKQAATG) has biased composition (polar residues). Residues 12 to 17 (LENLNI) carry the Nuclear export signal motif. RRM domains follow at residues 38-116 (ASLY…WSQR), 126-203 (GNIF…PHLS), 219-296 (TNLY…RAQK), and 322-399 (VNLF…IAQR). At arginine 107 the chain carries Omega-N-methylarginine. Phosphoserine is present on serine 249. The required and sufficient for nuclear import stretch occupies residues 281-317 (DSELNGEKLYVGRAQKKNERMHVLKKQYEAYRLEKMA). Serine 332 is subject to Phosphoserine. Lysine 337 participates in a covalent cross-link: Glycyl lysine isopeptide (Lys-Gly) (interchain with G-Cter in ubiquitin). Phosphoserine is present on serine 405. An interaction with SUP35 region spans residues 473–577 (PPQFRNGPVY…KEQEQQTEQA (105 aa)). Residues 489–568 (GFPRNANDNN…ASAAYESFKK (80 aa)) form the PABC domain.

It belongs to the polyadenylate-binding protein type-1 family. Binds to poly(A) mRNA to form a periodic structure with a packing density of one molecule per 25 adenylate residues. Interacts with the nuclear export factor CRM1 and with the importin SXM1. Interacts with RNA15, a component of the cleavage factor IA (CFIA) complex. Interacts with translation initiation factor eIF4G (TIF4631 or TIF4632) and release factor eRF3 (SUP35). Interacts with the PAB-dependent poly(A)-nuclease (PAN) complex regulatory subunit PAN3. Interacts with ARF1, DCP1, PBP1, the Hsp70 chaperone SSA1, and TPA1. Interacts with PAT1 in an RNA-dependent manner.

The protein localises to the cytoplasm. It is found in the nucleus. Binds the poly(A) tail of mRNA. Appears to be an important mediator of the multiple roles of the poly(A) tail in mRNA biogenesis, stability and translation. In the nucleus, interacts with the nuclear cleavage factor IA (CFIA), which is required for both mRNA cleavage and polyadenylation. Is also required for efficient mRNA export to the cytoplasm. Acts in concert with a poly(A)-specific nuclease (PAN) to affect poly(A) tail shortening, which may occur concomitantly with either nucleocytoplasmic mRNA transport or translational initiation. Regulates PAN activity via interaction with the stimulator PAN3 or the inhibitor PBP1. In the cytoplasm, affects both translation and mRNA decay. Stimulates translation by interaction with translation initiation factor eIF4G, a subunit of the cap-binding complex eIF4F, bringing the 5'- and 3'-ends of the mRNA in proximity. The formation of this circular mRNP structure appears to be critical for the synergistic effects of the cap and the poly(A) tail in facilitating translation initiation, recycling of ribosomes, and mRNA stability. Also regulates translation termination by recruiting eukaryotic release factor 3 (eRF3). Interaction with eRF3 is also required for regulation of normal mRNA decay through translation termination-coupled poly(A) shortening, probably mediated by PAN. Loss of PAB1 from the mRNP after deadenylation triggers mRNA degradation. Inhibits the major cytoplasmic mRNA deadenylase CCR4-NOT complex. Is also associated peripherally with COPI vesicles through its interaction with ARF1, and this is required for correct localization of the asymmetrically distributed ASH1 mRNA. The chain is Polyadenylate-binding protein, cytoplasmic and nuclear (PAB1) from Saccharomyces cerevisiae (strain ATCC 204508 / S288c) (Baker's yeast).